Reading from the N-terminus, the 316-residue chain is HTH-type transcriptional regulator cbl (316 aa).

Residues 1–59 form the HTH lysR-type domain; it reads MNFQQLKIIREAARQDYNLTEVANMLYTSQSGVSRHIRELEEELGIEIFIRRGKRLLGM. A DNA-binding region (H-T-H motif) is located at residues 19-38; that stretch reads LTEVANMLYTSQSGVSRHIR.

It belongs to the LysR transcriptional regulatory family.

Its function is as follows. May be an accessory regulatory protein within the cys regulon. The polypeptide is HTH-type transcriptional regulator cbl (cbl) (Klebsiella aerogenes (Enterobacter aerogenes)).